The following is a 209-amino-acid chain: Large ribosomal subunit protein bL9 (209 aa).

A disordered region spans residues 169–209 (RDGASFTEDYDPNAEPGLATEAEEAVADADDNAETNSEESL). Over residues 189-209 (EAEEAVADADDNAETNSEESL) the composition is skewed to acidic residues.

The protein belongs to the bacterial ribosomal protein bL9 family.

Binds to the 23S rRNA. The polypeptide is Large ribosomal subunit protein bL9 (Zymomonas mobilis subsp. mobilis (strain ATCC 31821 / ZM4 / CP4)).